A 2124-amino-acid chain; its full sequence is AMB antimetabolite synthetase AmbE (2124 aa).

The interval 456–847 is adenylation; it reads LRAALQPQAP…LGRIDEQVKI (392 aa). The interval 950–1147 is methyltransferase; the sequence is DVGANIGLFS…DLLRRHGFEV (198 aa). Positions 1251-1325 constitute a Carrier 1 domain; sequence APANATEAAL…ELARLLAAPA (75 aa). O-(pantetheine 4'-phosphoryl)serine is present on serine 1286. Residues 1359-1780 are condensation; it reads DAYPMTSLQQ…ALLGDPVQPP (422 aa). One can recognise a Carrier 2 domain in the interval 1785–1859; the sequence is AEDSVELRRV…EVVRRCHAAD (75 aa). Serine 1819 carries the post-translational modification O-(pantetheine 4'-phosphoryl)serine. Positions 1886–2107 are thioesterase; that stretch reads RLIALPPAGG…AAEEVCAILR (222 aa).

This sequence belongs to the NRP synthetase family. The cofactor is pantetheine 4'-phosphate.

The enzyme catalyses holo-[peptidyl-carrier protein] + L-glutamate + ATP = L-glutamyl-[peptidyl-carrier protein] + AMP + diphosphate. Functionally, involved in the biosynthesis of the antimetabolite L-2-amino-4-methoxy-trans-3-butenoic acid (AMB), a non-proteinogenic amino acid which is toxic for prokaryotes and eukaryotes. Adenylates L-glutamate and loads it onto its first peptidyl carrier domain via a thioester linkage to the phosphopanthetheine moiety. The second peptidyl carrier domain is loaded with a L-alanine activated by AmbB. After formation by AmbB of the L-Glu-L-Ala dipeptide at the first carrier domain of AmbE, the condensation domain of AmbE probably condenses this dipeptide with the L-Ala residue attached at the second carrier domain of AmbE to give the L-Ala-L-Glu-L-Ala tripeptide. The central amino acid, L-Glu, would then undergo a series of modifications to be converted into AMB while the two flanking L-Ala residues remain in place. Finally, the L-Ala-AMB-L-Ala tripeptide is probably released by thioester cleavage via the thioester domain of AmbE. In Pseudomonas aeruginosa (strain ATCC 15692 / DSM 22644 / CIP 104116 / JCM 14847 / LMG 12228 / 1C / PRS 101 / PAO1), this protein is AMB antimetabolite synthetase AmbE.